We begin with the raw amino-acid sequence, 138 residues long: Translation initiation factor 2 subunit beta (138 aa).

It belongs to the eIF-2-beta/eIF-5 family. As to quaternary structure, heterotrimer composed of an alpha, a beta and a gamma chain.

In terms of biological role, eIF-2 functions in the early steps of protein synthesis by forming a ternary complex with GTP and initiator tRNA. This Methanococcus vannielii (strain ATCC 35089 / DSM 1224 / JCM 13029 / OCM 148 / SB) protein is Translation initiation factor 2 subunit beta.